Consider the following 22-residue polypeptide: Leptoglycin (22 aa).

The disordered stretch occupies residues 1–22 (GLLGGLLGPLLGGGGGGGGGLL).

In terms of tissue distribution, expressed by the skin glands.

It is found in the secreted. Antimicrobial protein. Has antibacterial activity against the Gram-negative bacteria E.coli ATCC 28922 (MIC=50 uM), P.aeruginosa ATCC 9027 (MIC=8 uM) and C.freundii ATCC 8090 (MIC=75 uM). Does not have hemolytic activity. The sequence is that of Leptoglycin from Leptodactylus pentadactylus (Smokey jungle frog).